Consider the following 314-residue polypeptide: MSSTAAFYLLSTLGGYLVTSFLLLKYPTLLHQRKKQRFLSKHISHRGGAGENLENTMAAFQHAVKIGTDMLELDCHITKDEQVVVSHDENLKRATGVNVNISDLKYCELPPYLGKLDVSFQRACQCEGKDNRIPLLKEVFEAFPNTPINIDIKVNNNVLIKKVSELVKRYNREHLTVWGNANYEIVEKCYKENSDIPILFSLQRVLLILGLFFTGLLPFVPIREQFFEIPMPSIILKLKEPHTMSRSQKFLIWLSDLLLMRKALFDHLTARGIQVYIWVLNEEQEYKRAFDLGATGVMTDYPTKLRDFLHNFSA.

At 1 to 3 the chain is on the extracellular side; that stretch reads MSS. The chain crosses the membrane as a helical span at residues 4–24; the sequence is TAAFYLLSTLGGYLVTSFLLL. At 25 to 195 the chain is on the cytoplasmic side; that stretch reads KYPTLLHQRK…VEKCYKENSD (171 aa). The GP-PDE domain occupies 40 to 309; it reads SKHISHRGGA…DYPTKLRDFL (270 aa). 3 residues coordinate a divalent metal cation: Glu72, Asp74, and His87. A helical transmembrane segment spans residues 196–216; the sequence is IPILFSLQRVLLILGLFFTGL. The Extracellular portion of the chain corresponds to 217 to 314; it reads LPFVPIREQF…LRDFLHNFSA (98 aa).

This sequence belongs to the glycerophosphoryl diester phosphodiesterase family. In terms of tissue distribution, widely expressed with high expression level in testis.

The protein resides in the cytoplasm. The protein localises to the membrane. It is found in the perinuclear region. It localises to the endoplasmic reticulum. It carries out the reaction a 1-O-alkyl-sn-glycero-3-phosphocholine + H2O = a 1-O-alkyl-sn-glycero-3-phosphate + choline + H(+). The enzyme catalyses 1-hexadecanoyl-sn-glycero-3-phosphocholine + H2O = 1-hexadecanoyl-sn-glycero-3-phosphate + choline + H(+). The catalysed reaction is N-hexadecanoyl-sn-glycero-3-phosphoethanolamine + H2O = N-hexadecanoylethanolamine + sn-glycerol 3-phosphate + H(+). It catalyses the reaction N-(5Z,8Z,11Z,14Z-eicosatetraenoyl)-1-(9Z-octadecenoyl)-sn-glycero-3-phosphoethanolamine + H2O = N-(5Z,8Z,11Z,14Z-eicosatetraenoyl)-ethanolamine + 1-(9Z-octadecenoyl)-sn-glycero-3-phosphate + H(+). It carries out the reaction N,1-di-(9Z-octadecenoyl)-sn-glycero-3-phosphoethanolamine + H2O = N-(9Z-octadecenoyl) ethanolamine + 1-(9Z-octadecenoyl)-sn-glycero-3-phosphate + H(+). The enzyme catalyses N-hexadecanoyl-1-(9Z-octadecenoyl)-sn-glycero-3-phosphoethanolamine + H2O = N-hexadecanoylethanolamine + 1-(9Z-octadecenoyl)-sn-glycero-3-phosphate + H(+). The catalysed reaction is 1-O-(1Z-octadecenyl)-sn-glycero-3-phospho-N-hexadecanoyl-ethanolamine + H2O = 1-O-(1Z-octadecenyl)-sn-glycero-3-phosphate + N-hexadecanoylethanolamine + H(+). It catalyses the reaction 1-hexadecanoyl-sn-glycero-3-phosphoethanolamine + H2O = 1-hexadecanoyl-sn-glycero-3-phosphate + ethanolamine + H(+). It carries out the reaction 1-O-hexadecyl-sn-glycero-3-phosphocholine + H2O = 1-O-hexadecyl-sn-glycero-3-phosphate + choline + H(+). The enzyme catalyses 1-(9Z-octadecenoyl)-sn-glycero-3-phosphocholine + H2O = 1-(9Z-octadecenoyl)-sn-glycero-3-phosphate + choline + H(+). The catalysed reaction is N,1-dihexadecanoyl-sn-glycero-3-phosphoethanolamine + H2O = N-hexadecanoylethanolamine + 1-hexadecanoyl-sn-glycero-3-phosphate + H(+). It catalyses the reaction 1-O-(1Z-octadecenyl)-sn-glycero-3-phospho-(N-5Z,8Z,11Z,14Z-eicosatetraenoyl)-ethanolamine + H2O = 1-O-(1Z-octadecenyl)-sn-glycero-3-phosphate + N-(5Z,8Z,11Z,14Z-eicosatetraenoyl)-ethanolamine + H(+). It carries out the reaction 1-O-(1Z-octadecenyl)-sn-glycero-3-phospho-(N-9Z-octadecenoyl)-ethanolamine + H2O = 1-O-(1Z-octadecenyl)-sn-glycero-3-phosphate + N-(9Z-octadecenoyl) ethanolamine + H(+). With respect to regulation, lysophospholipase D activity is increased by magnesium and manganese and inhibited by calcium in a concentration dependent manner. Loss of lysophospholipase D activity by addition of EDTA. Functionally, hydrolyzes lysoglycerophospholipids to produce lysophosphatidic acid (LPA) and the corresponding amines. Shows a preference for 1-O-alkyl-sn-glycero-3-phosphocholine (lyso-PAF), lysophosphatidylethanolamine (lyso-PE) and lysophosphatidylcholine (lyso-PC). May be involved in bioactive N-acylethanolamine biosynthesis from both N-acyl-lysoplasmenylethanolamin (N-acyl-lysoPlsEt) and N-acyl-lysophosphatidylethanolamin (N-acyl-lysoPE). In addition, hydrolyzes glycerophospho-N-acylethanolamine to N-acylethanolamine. Does not display glycerophosphodiester phosphodiesterase activity, since it cannot hydrolyze either glycerophosphoinositol or glycerophosphocholine. The protein is Lysophospholipase D GDPD1 of Homo sapiens (Human).